The chain runs to 350 residues: Twinfilin-1 (350 aa).

An N-acetylserine modification is found at Ser2. Positions 2-139 (SHQTGIQASE…SLHGYKKYLL (138 aa)) constitute an ADF-H 1 domain. A phosphoserine mark is found at Ser143 and Ser277. One can recognise an ADF-H 2 domain in the interval 175 to 313 (LQGVAFPISR…TADFLYDEVH (139 aa)). Residue Tyr309 is modified to Phosphotyrosine. Positions 317-350 (HAHKQSFAKPKGPAGKRGIRRLIRGPAEAEATTD) are disordered. A Phosphothreonine modification is found at Thr349.

The protein belongs to the actin-binding proteins ADF family. Twinfilin subfamily. As to quaternary structure, interacts with G-actin; ADP-actin form and capping protein (CP). May also be able to interact with TWF2 and phosphoinositides, PI(4,5)P2. When bound to PI(4,5)P2, it is down-regulated. Interacts with ACTG1. Phosphorylated on serine and threonine residues. As to expression, widely expressed with highest levels in brain, liver and kidney. Also expressed in heart, lung and testis. Not detected in spleen or skeletal muscle.

It is found in the cytoplasm. It localises to the cytoskeleton. Functionally, actin-binding protein involved in motile and morphological processes. Inhibits actin polymerization, likely by sequestering G-actin. By capping the barbed ends of filaments, it also regulates motility. Seems to play an important role in clathrin-mediated endocytosis and distribution of endocytic organelles. This chain is Twinfilin-1 (Twf1), found in Mus musculus (Mouse).